The following is a 541-amino-acid chain: Multidrug transporter protein MdtP (541 aa).

14 helical membrane passes run 14–34 (LLIT…TIVG), 40–60 (IVGD…YLLT), 79–99 (IVYV…GMAN), 112–132 (GIGG…LFTG), 141–161 (VFGA…GWIV), 168–188 (WVFY…ARGL), 201–221 (IAGI…LSFG), 229–249 (SWQI…FIIV), 273–293 (LIGF…PFFM), 307–327 (IMTP…QLVY), 329–349 (IGIK…FLLL), 359–379 (LVAT…MPIL), 401–420 (FFRS…VMNA), and 492–512 (LHSV…FTLF).

Belongs to the major facilitator superfamily. EmrB family.

Its subcellular location is the cell membrane. Functionally, multidrug efflux transporter. Contributes to resistance to several antibiotics, including fusidic acid, novobiocin, streptomycin and actinomycin, possibly by pumping these structurally unrelated antibiotics out of cells. This chain is Multidrug transporter protein MdtP, found in Bacillus subtilis (strain 168).